Consider the following 298-residue polypeptide: Heme A synthase (298 aa).

Topologically, residues 1-6 are cytoplasmic; it reads MHRSLK. Residues 7 to 27 traverse the membrane as a helical segment; sequence IFGTLTSIGMVIVLMQGALVT. Topologically, residues 28 to 62 are extracellular; sequence KTESGEGCGATWPLCFGEVIPTNPAIETIIEYSHR. Cysteines 35 and 42 form a disulfide. Glutamate 58 is a catalytic residue. Residue histidine 61 coordinates heme o. The helical transmembrane segment at 63-83 threads the bilayer; the sequence is IVSGLLGAMVIILAIWAWRKL. Residues 84–92 lie on the Cytoplasmic side of the membrane; the sequence is SHIRETKVM. A helical membrane pass occupies residues 93–113; that stretch reads AILAVLFIIFQGLLGAGAVVF. Residues 114–117 are Extracellular-facing; it reads GQSH. A helical membrane pass occupies residues 118-138; it reads AILALHFGISAISLATVVLLT. A heme o-binding site is contributed by histidine 123. At 139–158 the chain is on the cytoplasmic side; that stretch reads TLAFEDGKPNPPALIVKKGY. A helical membrane pass occupies residues 159–179; the sequence is KGYILAVFAYCYAVIYTGAYV. At 180–209 the chain is on the extracellular side; that stretch reads KHTQATLACGDFPLCNGQWIPMLSGPVGAH. A disulfide bridge connects residues cysteine 188 and cysteine 194. The chain crosses the membrane as a helical span at residues 210–230; the sequence is FFHRVAGTLLLILLVVALIWT. A heme b-binding site is contributed by histidine 212. The Cytoplasmic portion of the chain corresponds to 231–244; that stretch reads LRKYSHYRSLVWTH. The helical transmembrane segment at 245 to 265 threads the bilayer; the sequence is ILCVILVLTQYATGISIVLTG. Over 266 to 271 the chain is Extracellular; that stretch reads NELFVA. A helical transmembrane segment spans residues 272–292; that stretch reads MMHALIVSILFTTLCYIVMIL. Histidine 274 is a binding site for heme b. Over 293–298 the chain is Cytoplasmic; the sequence is SRNKAV.

This sequence belongs to the COX15/CtaA family. Type 1 subfamily. Interacts with CtaB. Heme b is required as a cofactor.

It is found in the cell membrane. The enzyme catalyses Fe(II)-heme o + 2 A + H2O = Fe(II)-heme a + 2 AH2. It participates in porphyrin-containing compound metabolism; heme A biosynthesis; heme A from heme O: step 1/1. Catalyzes the conversion of heme O to heme A by two successive hydroxylations of the methyl group at C8. The first hydroxylation forms heme I, the second hydroxylation results in an unstable dihydroxymethyl group, which spontaneously dehydrates, resulting in the formyl group of heme A. This is Heme A synthase from Halalkalibacterium halodurans (strain ATCC BAA-125 / DSM 18197 / FERM 7344 / JCM 9153 / C-125) (Bacillus halodurans).